Consider the following 340-residue polypeptide: N-acetyl-gamma-glutamyl-phosphate reductase (340 aa).

Residue C146 is part of the active site.

This sequence belongs to the NAGSA dehydrogenase family. Type 1 subfamily.

The protein resides in the cytoplasm. The enzyme catalyses N-acetyl-L-glutamate 5-semialdehyde + phosphate + NADP(+) = N-acetyl-L-glutamyl 5-phosphate + NADPH + H(+). The protein operates within amino-acid biosynthesis; L-arginine biosynthesis; N(2)-acetyl-L-ornithine from L-glutamate: step 3/4. Its function is as follows. Catalyzes the NADPH-dependent reduction of N-acetyl-5-glutamyl phosphate to yield N-acetyl-L-glutamate 5-semialdehyde. This chain is N-acetyl-gamma-glutamyl-phosphate reductase, found in Streptococcus sanguinis (strain SK36).